The chain runs to 491 residues: Pentatricopeptide repeat-containing protein At5g27460 (491 aa).

PPR repeat units follow at residues Ser69–Gln99, Ser105–Met139, Ala142–Val176, Thr177–Arg211, Asn212–Glu246, Gly248–Met278, Asn283–Val313, Ser318–Gln348, Asp353–Pro387, and Asn388–Pro426.

It belongs to the PPR family. P subfamily.

This is Pentatricopeptide repeat-containing protein At5g27460 from Arabidopsis thaliana (Mouse-ear cress).